We begin with the raw amino-acid sequence, 356 residues long: tRNA N6-adenosine threonylcarbamoyltransferase (356 aa).

Fe cation is bound by residues histidine 115 and histidine 119. Substrate is bound by residues 138-142 (LVSGG), aspartate 171, glycine 184, and asparagine 283. Aspartate 311 provides a ligand contact to Fe cation.

The protein belongs to the KAE1 / TsaD family. The cofactor is Fe(2+).

It is found in the cytoplasm. The catalysed reaction is L-threonylcarbamoyladenylate + adenosine(37) in tRNA = N(6)-L-threonylcarbamoyladenosine(37) in tRNA + AMP + H(+). Its function is as follows. Required for the formation of a threonylcarbamoyl group on adenosine at position 37 (t(6)A37) in tRNAs that read codons beginning with adenine. Is involved in the transfer of the threonylcarbamoyl moiety of threonylcarbamoyl-AMP (TC-AMP) to the N6 group of A37, together with TsaE and TsaB. TsaD likely plays a direct catalytic role in this reaction. This is tRNA N6-adenosine threonylcarbamoyltransferase from Prochlorococcus marinus (strain MIT 9301).